The primary structure comprises 263 residues: Hydroxyethylthiazole kinase 1 (263 aa).

Position 42 (methionine 42) interacts with substrate. Residues lysine 118 and threonine 164 each coordinate ATP. Glycine 191 contributes to the substrate binding site.

This sequence belongs to the Thz kinase family. It depends on Mg(2+) as a cofactor.

The catalysed reaction is 5-(2-hydroxyethyl)-4-methylthiazole + ATP = 4-methyl-5-(2-phosphooxyethyl)-thiazole + ADP + H(+). The protein operates within cofactor biosynthesis; thiamine diphosphate biosynthesis; 4-methyl-5-(2-phosphoethyl)-thiazole from 5-(2-hydroxyethyl)-4-methylthiazole: step 1/1. Functionally, catalyzes the phosphorylation of the hydroxyl group of 4-methyl-5-beta-hydroxyethylthiazole (THZ). This Clostridium botulinum (strain ATCC 19397 / Type A) protein is Hydroxyethylthiazole kinase 1.